A 583-amino-acid polypeptide reads, in one-letter code: Aspartate--tRNA ligase (583 aa).

E174 serves as a coordination point for L-aspartate. The segment at 198-201 (QITK) is aspartate. R220 serves as a coordination point for L-aspartate. ATP is bound by residues 220–222 (RDE) and Q229. H443 is an L-aspartate binding site. E477 provides a ligand contact to ATP. R484 is an L-aspartate binding site. Residue 529-532 (GLDR) coordinates ATP.

This sequence belongs to the class-II aminoacyl-tRNA synthetase family. Type 1 subfamily. As to quaternary structure, homodimer.

It localises to the cytoplasm. It carries out the reaction tRNA(Asp) + L-aspartate + ATP = L-aspartyl-tRNA(Asp) + AMP + diphosphate. In terms of biological role, catalyzes the attachment of L-aspartate to tRNA(Asp) in a two-step reaction: L-aspartate is first activated by ATP to form Asp-AMP and then transferred to the acceptor end of tRNA(Asp). This chain is Aspartate--tRNA ligase, found in Streptococcus thermophilus (strain ATCC BAA-491 / LMD-9).